A 103-amino-acid polypeptide reads, in one-letter code: Large ribosomal subunit protein bL21 (103 aa).

Belongs to the bacterial ribosomal protein bL21 family. In terms of assembly, part of the 50S ribosomal subunit. Contacts protein L20.

Its function is as follows. This protein binds to 23S rRNA in the presence of protein L20. The polypeptide is Large ribosomal subunit protein bL21 (Pseudoalteromonas atlantica (strain T6c / ATCC BAA-1087)).